A 227-amino-acid chain; its full sequence is PKHD-type hydroxylase NE2125 (227 aa).

Positions 78–179 (KIVPPFFNRY…RLACFMFIQS (102 aa)) constitute a Fe2OG dioxygenase domain. His97, Asp99, and His160 together coordinate Fe cation. Arg170 provides a ligand contact to 2-oxoglutarate.

Requires Fe(2+) as cofactor. L-ascorbate serves as cofactor.

This is PKHD-type hydroxylase NE2125 from Nitrosomonas europaea (strain ATCC 19718 / CIP 103999 / KCTC 2705 / NBRC 14298).